Reading from the N-terminus, the 150-residue chain is Cell division protein SepF (150 aa).

Belongs to the SepF family. As to quaternary structure, homodimer. Interacts with FtsZ.

It is found in the cytoplasm. Functionally, cell division protein that is part of the divisome complex and is recruited early to the Z-ring. Probably stimulates Z-ring formation, perhaps through the cross-linking of FtsZ protofilaments. Its function overlaps with FtsA. In Clostridium beijerinckii (strain ATCC 51743 / NCIMB 8052) (Clostridium acetobutylicum), this protein is Cell division protein SepF.